We begin with the raw amino-acid sequence, 137 residues long: Endoribonuclease YbeY (137 aa).

Residues histidine 107, histidine 111, and aspartate 117 each coordinate Zn(2+).

It belongs to the endoribonuclease YbeY family. Zn(2+) is required as a cofactor.

It is found in the cytoplasm. Single strand-specific metallo-endoribonuclease involved in late-stage 70S ribosome quality control and in maturation of the 3' terminus of the 16S rRNA. The chain is Endoribonuclease YbeY from Bacteroides thetaiotaomicron (strain ATCC 29148 / DSM 2079 / JCM 5827 / CCUG 10774 / NCTC 10582 / VPI-5482 / E50).